The primary structure comprises 710 residues: Methionine--tRNA ligase (710 aa).

Positions 16 to 26 (PYANGAFHIGH) match the 'HIGH' region motif. Zn(2+) contacts are provided by C147, C150, C160, and C163. The 'KMSKS' region signature appears at 350 to 354 (KMSKS). K353 lines the ATP pocket. The 107-residue stretch at 604 to 710 (DFAKIDLRIA…PGAEPGMRVG (107 aa)) folds into the tRNA-binding domain.

The protein belongs to the class-I aminoacyl-tRNA synthetase family. MetG type 1 subfamily. As to quaternary structure, homodimer. Zn(2+) is required as a cofactor.

Its subcellular location is the cytoplasm. The catalysed reaction is tRNA(Met) + L-methionine + ATP = L-methionyl-tRNA(Met) + AMP + diphosphate. Functionally, is required not only for elongation of protein synthesis but also for the initiation of all mRNA translation through initiator tRNA(fMet) aminoacylation. This chain is Methionine--tRNA ligase, found in Herminiimonas arsenicoxydans.